Here is a 724-residue protein sequence, read N- to C-terminus: Catalase-peroxidase (724 aa).

Positions 96–225 (WHAAGTYRVA…LAAVMMGLIY (130 aa)) form a cross-link, tryptophyl-tyrosyl-methioninium (Trp-Tyr) (with M-251). The Proton acceptor role is filled by H97. Residues 225 to 251 (YVNPEGVDGNPDPLRTAEDVRITFERM) constitute a cross-link (tryptophyl-tyrosyl-methioninium (Tyr-Met) (with W-96)). H266 is a heme b binding site.

The protein belongs to the peroxidase family. Peroxidase/catalase subfamily. As to quaternary structure, homodimer or homotetramer. Heme b serves as cofactor. In terms of processing, formation of the three residue Trp-Tyr-Met cross-link is important for the catalase, but not the peroxidase activity of the enzyme.

The enzyme catalyses H2O2 + AH2 = A + 2 H2O. It catalyses the reaction 2 H2O2 = O2 + 2 H2O. Functionally, bifunctional enzyme with both catalase and broad-spectrum peroxidase activity. This is Catalase-peroxidase from Halorhodospira halophila (strain DSM 244 / SL1) (Ectothiorhodospira halophila (strain DSM 244 / SL1)).